A 170-amino-acid chain; its full sequence is Large ribosomal subunit protein bL9 (170 aa).

The tract at residues aspartate 149–glutamate 170 is disordered.

It belongs to the bacterial ribosomal protein bL9 family.

In terms of biological role, binds to the 23S rRNA. This Psychrobacter cryohalolentis (strain ATCC BAA-1226 / DSM 17306 / VKM B-2378 / K5) protein is Large ribosomal subunit protein bL9.